A 709-amino-acid chain; its full sequence is Heme/hemopexin utilization protein C (709 aa).

A signal peptide spans 1-21 (MRFSKLSLAITTTLVTANALA). The TBDR plug domain occupies 36-147 (DPSRFTYTPQ…LGGVVAMRTP (112 aa)). The region spanning 158 to 709 (KFGVKIRQGY…NAKISAVYSF (552 aa)) is the TBDR beta-barrel domain. The TonB C-terminal box signature appears at 692–709 (SLMEGTGRNAKISAVYSF).

This sequence belongs to the TonB-dependent receptor family.

Its subcellular location is the cell outer membrane. Functionally, required for utilization of free heme at low concentrations. The sequence is that of Heme/hemopexin utilization protein C (hxuC) from Haemophilus influenzae (strain 86-028NP).